Reading from the N-terminus, the 256-residue chain is Thiazole synthase (256 aa).

The active-site Schiff-base intermediate with DXP is Lys95. Residues Gly156, 182–183, and 204–205 contribute to the 1-deoxy-D-xylulose 5-phosphate site; these read AG and NT.

The protein belongs to the ThiG family. As to quaternary structure, homotetramer. Forms heterodimers with either ThiH or ThiS.

Its subcellular location is the cytoplasm. It catalyses the reaction [ThiS sulfur-carrier protein]-C-terminal-Gly-aminoethanethioate + 2-iminoacetate + 1-deoxy-D-xylulose 5-phosphate = [ThiS sulfur-carrier protein]-C-terminal Gly-Gly + 2-[(2R,5Z)-2-carboxy-4-methylthiazol-5(2H)-ylidene]ethyl phosphate + 2 H2O + H(+). Its pathway is cofactor biosynthesis; thiamine diphosphate biosynthesis. Functionally, catalyzes the rearrangement of 1-deoxy-D-xylulose 5-phosphate (DXP) to produce the thiazole phosphate moiety of thiamine. Sulfur is provided by the thiocarboxylate moiety of the carrier protein ThiS. In vitro, sulfur can be provided by H(2)S. The polypeptide is Thiazole synthase (Shigella boydii serotype 18 (strain CDC 3083-94 / BS512)).